Here is a 348-residue protein sequence, read N- to C-terminus: Heat-inducible transcription repressor HrcA (348 aa).

This sequence belongs to the HrcA family.

Negative regulator of class I heat shock genes (grpE-dnaK-dnaJ and groELS operons). Prevents heat-shock induction of these operons. This is Heat-inducible transcription repressor HrcA from Syntrophobacter fumaroxidans (strain DSM 10017 / MPOB).